A 523-amino-acid polypeptide reads, in one-letter code: Ribonuclease Y (523 aa).

A helical transmembrane segment spans residues 7–24; it reads LSSLASALLAGGGTYLVY. A KH domain is found at 213–279; sequence LINVVNLPND…TRTIEALVED (67 aa). One can recognise an HD domain in the interval 339 to 432; sequence ALGHSLEVAN…VCAADALSAA (94 aa).

This sequence belongs to the RNase Y family.

It localises to the cell membrane. Functionally, endoribonuclease that initiates mRNA decay. The sequence is that of Ribonuclease Y from Wolinella succinogenes (strain ATCC 29543 / DSM 1740 / CCUG 13145 / JCM 31913 / LMG 7466 / NCTC 11488 / FDC 602W) (Vibrio succinogenes).